The chain runs to 473 residues: Siroheme synthase (473 aa).

The segment at 1 to 203 is precorrin-2 dehydrogenase /sirohydrochlorin ferrochelatase; sequence MTLFPIFADL…QQPGLAEQEL (203 aa). Residues 22–23 and 43–44 each bind NAD(+); these read AV and PR. Serine 128 carries the post-translational modification Phosphoserine. The tract at residues 216–473 is uroporphyrinogen-III C-methyltransferase; it reads GSVVLVGAGP…GLPGPQALAA (258 aa). Proline 225 is a binding site for S-adenosyl-L-methionine. The active-site Proton acceptor is aspartate 248. The active-site Proton donor is lysine 270. S-adenosyl-L-methionine is bound by residues 302–304, isoleucine 307, 332–333, methionine 384, and glycine 413; these read GGD and TA.

In the N-terminal section; belongs to the precorrin-2 dehydrogenase / sirohydrochlorin ferrochelatase family. This sequence in the C-terminal section; belongs to the precorrin methyltransferase family.

It carries out the reaction uroporphyrinogen III + 2 S-adenosyl-L-methionine = precorrin-2 + 2 S-adenosyl-L-homocysteine + H(+). The enzyme catalyses precorrin-2 + NAD(+) = sirohydrochlorin + NADH + 2 H(+). The catalysed reaction is siroheme + 2 H(+) = sirohydrochlorin + Fe(2+). It participates in cofactor biosynthesis; adenosylcobalamin biosynthesis; precorrin-2 from uroporphyrinogen III: step 1/1. It functions in the pathway cofactor biosynthesis; adenosylcobalamin biosynthesis; sirohydrochlorin from precorrin-2: step 1/1. The protein operates within porphyrin-containing compound metabolism; siroheme biosynthesis; precorrin-2 from uroporphyrinogen III: step 1/1. Its pathway is porphyrin-containing compound metabolism; siroheme biosynthesis; siroheme from sirohydrochlorin: step 1/1. It participates in porphyrin-containing compound metabolism; siroheme biosynthesis; sirohydrochlorin from precorrin-2: step 1/1. Multifunctional enzyme that catalyzes the SAM-dependent methylations of uroporphyrinogen III at position C-2 and C-7 to form precorrin-2 via precorrin-1. Then it catalyzes the NAD-dependent ring dehydrogenation of precorrin-2 to yield sirohydrochlorin. Finally, it catalyzes the ferrochelation of sirohydrochlorin to yield siroheme. This chain is Siroheme synthase, found in Bordetella parapertussis (strain 12822 / ATCC BAA-587 / NCTC 13253).